We begin with the raw amino-acid sequence, 277 residues long: MIPKLIVFGGNGFLGKRICQEAVTSGYQVVSVSRSGKAPHSNELNDKQWMQEVQWTAADIFKPDSYHELLNNATNVVHSLGILLENENYKQTLSKSPTYDSKSRLLSFGAGPNPLKKSSPYFTYEMMNKQSAIILADTFKQKILKKSKKEQEKANQRSFTYISADKGFPLIPSGYINSKREAEIELEKMQRYFRPIIVRPGFMFDEHRNAIGPRSFIHTALELLYCGNKFLLRNKLQLLNDLIRPTVSTQQVSKSVLKNIENPDFKGVVTLEEILKA.

It belongs to the NAD(P)-dependent epimerase/dehydratase family. In terms of assembly, associates with the mitochondrial ribosome. Component of a multi-subunit COQ enzyme complex.

Its subcellular location is the mitochondrion. The protein operates within cofactor biosynthesis; ubiquinone biosynthesis. Functionally, component of MIOREX complexes, large expressome-like assemblies of ribosomes with factors involved in all the steps of post-transcriptional gene expression. Component of a multi-subunit COQ enzyme complex required for coenzyme Q biosynthesis. This chain is MIOREX complex component 2, found in Saccharomyces cerevisiae (strain ATCC 204508 / S288c) (Baker's yeast).